The chain runs to 367 residues: Probable dual-specificity RNA methyltransferase RlmN (367 aa).

Residue Glu-92 is the Proton acceptor of the active site. The region spanning 98–326 is the Radical SAM core domain; it reads QEYGLSVCVT…YDTLKKNGIN (229 aa). A disulfide bridge connects residues Cys-105 and Cys-341. The [4Fe-4S] cluster site is built by Cys-112, Cys-116, and Cys-119. Residues 164–165, Ser-196, 219–221, and Asn-297 contribute to the S-adenosyl-L-methionine site; these read GE and SLH. The S-methylcysteine intermediate role is filled by Cys-341.

This sequence belongs to the radical SAM superfamily. RlmN family. Requires [4Fe-4S] cluster as cofactor.

The protein resides in the cytoplasm. It carries out the reaction adenosine(2503) in 23S rRNA + 2 reduced [2Fe-2S]-[ferredoxin] + 2 S-adenosyl-L-methionine = 2-methyladenosine(2503) in 23S rRNA + 5'-deoxyadenosine + L-methionine + 2 oxidized [2Fe-2S]-[ferredoxin] + S-adenosyl-L-homocysteine. The catalysed reaction is adenosine(37) in tRNA + 2 reduced [2Fe-2S]-[ferredoxin] + 2 S-adenosyl-L-methionine = 2-methyladenosine(37) in tRNA + 5'-deoxyadenosine + L-methionine + 2 oxidized [2Fe-2S]-[ferredoxin] + S-adenosyl-L-homocysteine. Its function is as follows. Specifically methylates position 2 of adenine 2503 in 23S rRNA and position 2 of adenine 37 in tRNAs. This is Probable dual-specificity RNA methyltransferase RlmN from Listeria monocytogenes serovar 1/2a (strain ATCC BAA-679 / EGD-e).